The following is a 334-amino-acid chain: Putative peptide import ATP-binding protein BAB2_1053 (334 aa).

One can recognise an ABC transporter domain in the interval 22–272 (VRTDDLVRDF…PLHPYSRALL (251 aa)). 64 to 71 (GESGSGKS) serves as a coordination point for ATP.

Belongs to the ABC transporter superfamily. In terms of assembly, the complex is composed of two ATP-binding proteins (BAB2_1052 and BAB2_1053), two transmembrane proteins (BAB2_1050 and BAB2_1051) and a solute-binding protein (BAB2_1049).

Its subcellular location is the cell inner membrane. In terms of biological role, probably part of an ABC transporter complex that could be involved in peptide import. Probably responsible for energy coupling to the transport system. The polypeptide is Putative peptide import ATP-binding protein BAB2_1053 (Brucella abortus (strain 2308)).